The primary structure comprises 116 residues: Large ribosomal subunit protein bL19 (116 aa).

The protein belongs to the bacterial ribosomal protein bL19 family.

This protein is located at the 30S-50S ribosomal subunit interface and may play a role in the structure and function of the aminoacyl-tRNA binding site. This Haemophilus ducreyi (strain 35000HP / ATCC 700724) protein is Large ribosomal subunit protein bL19.